Here is a 205-residue protein sequence, read N- to C-terminus: MIGKLKGVIDSYGEDYVILDVQGVGYLVHCATRTLQALPSSGEAAVLSIETYVREDQIKLFGFRSDIEREWFRLLQTVQGVGAKVALAVLSTLPPSDLANAIALRDKAAVARTPGVGPKVAERIVTELKDKAPAFANVDPAVVHLAGAVDDDRAPRPVKDAISALVNLGYGQPQAAAAIASVARDAGEGAETAQLIRLGLKELAK.

Residues 1-64 (MIGKLKGVID…EDQIKLFGFR (64 aa)) form a domain I region. A domain II region spans residues 65–143 (SDIEREWFRL…AFANVDPAVV (79 aa)). The interval 144–154 (HLAGAVDDDRA) is flexible linker. The tract at residues 154-205 (APRPVKDAISALVNLGYGQPQAAAAIASVARDAGEGAETAQLIRLGLKELAK) is domain III.

The protein belongs to the RuvA family. In terms of assembly, homotetramer. Forms an RuvA(8)-RuvB(12)-Holliday junction (HJ) complex. HJ DNA is sandwiched between 2 RuvA tetramers; dsDNA enters through RuvA and exits via RuvB. An RuvB hexamer assembles on each DNA strand where it exits the tetramer. Each RuvB hexamer is contacted by two RuvA subunits (via domain III) on 2 adjacent RuvB subunits; this complex drives branch migration. In the full resolvosome a probable DNA-RuvA(4)-RuvB(12)-RuvC(2) complex forms which resolves the HJ.

The protein localises to the cytoplasm. The RuvA-RuvB-RuvC complex processes Holliday junction (HJ) DNA during genetic recombination and DNA repair, while the RuvA-RuvB complex plays an important role in the rescue of blocked DNA replication forks via replication fork reversal (RFR). RuvA specifically binds to HJ cruciform DNA, conferring on it an open structure. The RuvB hexamer acts as an ATP-dependent pump, pulling dsDNA into and through the RuvAB complex. HJ branch migration allows RuvC to scan DNA until it finds its consensus sequence, where it cleaves and resolves the cruciform DNA. The sequence is that of Holliday junction branch migration complex subunit RuvA from Afipia carboxidovorans (strain ATCC 49405 / DSM 1227 / KCTC 32145 / OM5) (Oligotropha carboxidovorans).